A 205-amino-acid polypeptide reads, in one-letter code: Adenylyl-sulfate kinase (205 aa).

31 to 38 (GLSGAGKS) serves as a coordination point for ATP. Residue Ser105 is the Phosphoserine intermediate of the active site.

The protein belongs to the APS kinase family.

The catalysed reaction is adenosine 5'-phosphosulfate + ATP = 3'-phosphoadenylyl sulfate + ADP + H(+). Its pathway is sulfur metabolism; hydrogen sulfide biosynthesis; sulfite from sulfate: step 2/3. In terms of biological role, catalyzes the synthesis of activated sulfate. This Shewanella sp. (strain MR-4) protein is Adenylyl-sulfate kinase.